The primary structure comprises 348 residues: UPF0283 membrane protein HAPS_0079 (348 aa).

A run of 3 helical transmembrane segments spans residues 57–77 (FLAALALFGIATIAQSVQWLI), 86–106 (IYFAFAVAFFGISLAGVGAII), and 203–223 (ENAIIVAVSPLALVDILMVAW).

The protein belongs to the UPF0283 family.

It is found in the cell inner membrane. The polypeptide is UPF0283 membrane protein HAPS_0079 (Glaesserella parasuis serovar 5 (strain SH0165) (Haemophilus parasuis)).